Here is a 596-residue protein sequence, read N- to C-terminus: Protein NRT1/ PTR FAMILY 3.1 (596 aa).

A compositionally biased stretch (basic and acidic residues) spans 1–16 (MEEQSKNKISEEEKQL). Positions 1 to 23 (MEEQSKNKISEEEKQLHGRPNRP) are disordered. 12 consecutive transmembrane segments (helical) span residues 27-47 (LITM…VVGF), 73-93 (FAGT…SFAG), 98-118 (ITFA…SAII), 137-157 (TAQL…SGGI), 185-205 (NWYY…LVWI), 213-233 (LGLG…VGGF), 334-354 (MGPI…QGTF), 372-392 (IPAG…IIFY), 416-436 (MGIG…VEVK), 453-473 (IVPI…VAEA), 497-517 (ALFW…VTLV), and 542-562 (YFYW…LWCA).

It belongs to the major facilitator superfamily. Proton-dependent oligopeptide transporter (POT/PTR) (TC 2.A.17) family. Expressed in shoots, stems, leaves, flowers and siliques.

The protein localises to the membrane. May act as an efflux-type nitrite transporter. Not regulated by the PII protein involved in the regulation of nitrite uptake into higher plant chloroplasts. The protein is Protein NRT1/ PTR FAMILY 3.1 (NPF3.1) of Arabidopsis thaliana (Mouse-ear cress).